A 463-amino-acid chain; its full sequence is Cysteine--tRNA ligase (463 aa).

Cys-33 serves as a coordination point for Zn(2+). The 'HIGH' region signature appears at Pro-35–Asn-45. 3 residues coordinate Zn(2+): Cys-221, His-246, and Glu-250. The 'KMSKS' region signature appears at Lys-279–Ser-283. Lys-282 serves as a coordination point for ATP.

The protein belongs to the class-I aminoacyl-tRNA synthetase family. Monomer. The cofactor is Zn(2+).

The protein resides in the cytoplasm. It carries out the reaction tRNA(Cys) + L-cysteine + ATP = L-cysteinyl-tRNA(Cys) + AMP + diphosphate. The protein is Cysteine--tRNA ligase of Rhizobium leguminosarum bv. trifolii (strain WSM2304).